The primary structure comprises 175 residues: Peptide deformylase 1 (175 aa).

The Fe cation site is built by Cys-99 and His-141. Glu-142 is a catalytic residue. Fe cation is bound at residue His-145.

This sequence belongs to the polypeptide deformylase family. It depends on Fe(2+) as a cofactor.

The catalysed reaction is N-terminal N-formyl-L-methionyl-[peptide] + H2O = N-terminal L-methionyl-[peptide] + formate. In terms of biological role, removes the formyl group from the N-terminal Met of newly synthesized proteins. Requires at least a dipeptide for an efficient rate of reaction. N-terminal L-methionine is a prerequisite for activity but the enzyme has broad specificity at other positions. This is Peptide deformylase 1 from Rickettsia conorii (strain ATCC VR-613 / Malish 7).